The following is a 181-amino-acid chain: Crustacyanin-A1 subunit (181 aa).

3 cysteine pairs are disulfide-bonded: C12–C121, C51–C173, and C117–C150.

It belongs to the calycin superfamily. Lipocalin family. Oligomer; Can form dimers (beta-crustacyanin); or complexes of 16 subunits (alpha-crustacyanin). There are five types of subunits: A1, A2, A3, C1 and C2. Found in the carapace.

The protein resides in the secreted. The protein localises to the extracellular space. Binds the carotenoid astaxanthin (AXT) which provides the blue coloration to the carapace of the lobster. This is Crustacyanin-A1 subunit from Homarus gammarus (European lobster).